A 505-amino-acid polypeptide reads, in one-letter code: Kelch-like protein 42 (505 aa).

The 74-residue stretch at 5 to 78 (EMVQIRLEDR…INAGGAREGW (74 aa)) folds into the BTB domain. Residue serine 43 is modified to Phosphoserine. 6 Kelch repeats span residues 176–234 (PGDV…PLAN), 235–282 (NLPP…NEWL), 284–325 (VASM…DAWN), 327–372 (VAPL…DMWT), 374–429 (FETC…RQWL), and 431–480 (LKEN…DSWE).

Component of the BCR(KLHL42) E3 ubiquitin ligase complex, at least composed of CUL3 and KLHL42. Interacts (via the BTB domain) with CUL3. Interacts (via the kelch domains) with KATNA1.

It is found in the cytoplasm. It localises to the cytoskeleton. The protein localises to the spindle. The protein operates within protein modification; protein ubiquitination. In terms of biological role, substrate-specific adapter of a BCR (BTB-CUL3-RBX1) E3 ubiquitin-protein ligase complex required for mitotic progression and cytokinesis. The BCR(KLHL42) E3 ubiquitin ligase complex mediates the ubiquitination and subsequent degradation of KATNA1. Involved in microtubule dynamics throughout mitosis. In Homo sapiens (Human), this protein is Kelch-like protein 42 (KLHL42).